The following is a 92-amino-acid chain: Small ribosomal subunit protein uS19c (92 aa).

Belongs to the universal ribosomal protein uS19 family.

It is found in the plastid. The protein localises to the chloroplast. Its function is as follows. Protein S19 forms a complex with S13 that binds strongly to the 16S ribosomal RNA. This Phaseolus angularis (Azuki bean) protein is Small ribosomal subunit protein uS19c.